Consider the following 319-residue polypeptide: Cytochrome f (319 aa).

Residues 1–35 (MQNKDACKSLSSWVSLSISLLVLTVPLIWPYNSTA) form the signal peptide. Residues Phe-36, Cys-56, Cys-59, and His-60 each coordinate heme. A helical transmembrane segment spans residues 285-305 (IQGLLVFFASVILAQIFLVLK).

The protein belongs to the cytochrome f family. As to quaternary structure, the 4 large subunits of the cytochrome b6-f complex are cytochrome b6, subunit IV (17 kDa polypeptide, petD), cytochrome f and the Rieske protein, while the 4 small subunits are PetG, PetL, PetM and PetN. The complex functions as a dimer. Heme serves as cofactor.

Its subcellular location is the plastid. It localises to the chloroplast thylakoid membrane. In terms of biological role, component of the cytochrome b6-f complex, which mediates electron transfer between photosystem II (PSII) and photosystem I (PSI), cyclic electron flow around PSI, and state transitions. The chain is Cytochrome f from Staurastrum punctulatum (Green alga).